The sequence spans 643 residues: MTMNETSAIPARQRENQFFEIGVVGRKTGFTVPRDVKKGDDGFEDMDAYFLSDGSIHLDEDNGDIEQDMPPVTRLQPTSPMAVNAASDEASHASSSDSSDKNPDIPSSPLLMNSRALRASRGSSGPLIVPIDHSAFQAEDEGTADKTKVDGNKLSIQPRKANRIVDFSRIKASPDRKKFEPRRSTELPSKIPSSTPKDDNVQESPAFPDENITALQKNVANFTSIKDSGGRDNLYIQTISKPRRSYVQNNKSEQTIKPSKQNKQKEEKKTISQGNKPNSRDEDSELSIDVPLSMLNRSLANNSQKNKKRTPNKPLQESSINSVKEGESNPVVKRKRGRPRKNKLEIGNSVQTSEATQVKGAKKPAIRNAKKMSNEKDDSLNSQSDSASGEFIKTIARNNLQEIKQVEREDTLVGVRRSKRTRIAPLAFWKNERVVYELHRDENRIPALPEVKQIIRVDDPSPSIRQGRKKRHAKRSGVEIKSNLEAKSNDVEEYDAFYKDEINCEVLSWNEQNPKASEERVVGYSLPSVNLQQISNQQLKFASLFKEEPSFAAGVVEMPAGAEKPVKPSKHNIMSFCILQGKIEVTVNATTFRMKKDGVFIVPRGNYYSIKNIGKEAVRLYYTHATDTLENKRRGIGDFPNER.

2 disordered regions span residues 55 to 209 and 224 to 386; these read SIHL…AFPD and SIKD…QSDS. 2 stretches are compositionally biased toward low complexity: residues 85-97 and 104-125; these read AASD…SSSD and DIPS…GSSG. Positions 166 to 185 are enriched in basic and acidic residues; the sequence is DFSRIKASPDRKKFEPRRST. Polar residues-rich tracts occupy residues 235–261, 295–304, and 313–322; these read YIQT…PSKQ, LNRSLANNSQ, and KPLQESSINS. Composition is skewed to basic residues over residues 332-341 and 360-370; these read VKRKRGRPRK and GAKKPAIRNAK. Positions 333 to 345 form a DNA-binding region, a.T hook; that stretch reads KRKRGRPRKNKLE.

This sequence belongs to the CENP-C/MIF2 family. Component of the inner kinetochore constitutive centromere-associated network (CCAN) (also known as central kinetochore Sim4 complex in fission yeast), which is composed of at least cnl2, cnp3, cnp20, fta1, fta2, fta3, fta4, fta6, fta7, mal2, mhf1, mhf2, mis6, mis15, mis17, sim4 and wip1.

The protein resides in the nucleus. The protein localises to the nucleoplasm. Functionally, component of the kinetochore, a multiprotein complex that assembles on centromeric DNA and attaches chromosomes to spindle microtubules, mediating chromosome segregation and sister chromatid segregation during meiosis and mitosis. Component of the inner kinetochore constitutive centromere-associated network (CCAN), which serves as a structural platform for outer kinetochore assembly. In Schizosaccharomyces pombe (strain 972 / ATCC 24843) (Fission yeast), this protein is Inner kinetochore subunit cnp3 (cnp3).